A 339-amino-acid polypeptide reads, in one-letter code: Uroporphyrinogen decarboxylase (339 aa).

Substrate is bound by residues 21 to 25 (RQAGR), D71, Y146, S201, and H316.

The protein belongs to the uroporphyrinogen decarboxylase family. As to quaternary structure, homodimer.

The protein localises to the cytoplasm. It carries out the reaction uroporphyrinogen III + 4 H(+) = coproporphyrinogen III + 4 CO2. The protein operates within porphyrin-containing compound metabolism; protoporphyrin-IX biosynthesis; coproporphyrinogen-III from 5-aminolevulinate: step 4/4. Its function is as follows. Catalyzes the decarboxylation of four acetate groups of uroporphyrinogen-III to yield coproporphyrinogen-III. The polypeptide is Uroporphyrinogen decarboxylase (Rickettsia canadensis (strain McKiel)).